We begin with the raw amino-acid sequence, 470 residues long: Cell division protein FtsP (470 aa).

Positions 1–27 (MSFSRRQFLQASGIALCAGAIPLRANA) form a signal peptide, tat-type signal. The region spanning 222 to 287 (VEVSRGWVRL…RREILVDMTN (66 aa)) is the Plastocyanin-like domain.

The protein belongs to the FtsP family. Predicted to be exported by the Tat system. The position of the signal peptide cleavage has not been experimentally proven.

Its subcellular location is the periplasm. Cell division protein that is required for growth during stress conditions. May be involved in protecting or stabilizing the divisomal assembly under conditions of stress. This Salmonella typhi protein is Cell division protein FtsP.